Reading from the N-terminus, the 475-residue chain is MSPQTETKASVGFKAGVKDYKLTYYTPDYETKDTDILAAFRVTPQPGVPPEEAGAAVAAESSTGTWTTVWTDGLTSLDRYKGRCYHIEPVAGEETQFIAYVAYPLDLFEEGSVTNMFTSIVGNVFGFKALRALRLEDLRIPVAYCKTFQGPPHGIQVERDKLNKYGRPLLGCTIKPKLGLSAKNYGRAVYECLRGGLDFTKDDENVNSQPFMRWRDRFLFCAEAIFKAQSETGEIKGHYLNATAGTCEEMMKRAVFARELGVPIVMHDYLTGGFTANTTLAHYCRDNGLLLHIHRAMHAVIDRQKNHGMHFRVLAKALRMSGGDHIHAGTVVGKLEGERDITLGFVDLLRDDYIEKDRARGIYFTQDWVSLPGVLPVASGGIHVWHMPALTEIFGDDSVLQFGGGTLGHPWGNAPGAVANRVALEACVQARNEGRDLAREGNEIIRNASKWSPELAAACEVWKEIKFEFQAMDTL.

The residue at position 14 (Lys-14) is an N6,N6,N6-trimethyllysine. 2 residues coordinate substrate: Asn-123 and Thr-173. The active-site Proton acceptor is Lys-175. Position 177 (Lys-177) interacts with substrate. Mg(2+)-binding residues include Lys-201, Asp-203, and Glu-204. Lys-201 is subject to N6-carboxylysine. His-294 (proton acceptor) is an active-site residue. Residues Arg-295, His-327, and Ser-379 each contribute to the substrate site.

Belongs to the RuBisCO large chain family. Type I subfamily. Heterohexadecamer of 8 large chains and 8 small chains; disulfide-linked. The disulfide link is formed within the large subunit homodimers. The cofactor is Mg(2+). Post-translationally, the disulfide bond which can form in the large chain dimeric partners within the hexadecamer appears to be associated with oxidative stress and protein turnover.

Its subcellular location is the plastid. It is found in the chloroplast. It carries out the reaction 2 (2R)-3-phosphoglycerate + 2 H(+) = D-ribulose 1,5-bisphosphate + CO2 + H2O. The enzyme catalyses D-ribulose 1,5-bisphosphate + O2 = 2-phosphoglycolate + (2R)-3-phosphoglycerate + 2 H(+). RuBisCO catalyzes two reactions: the carboxylation of D-ribulose 1,5-bisphosphate, the primary event in carbon dioxide fixation, as well as the oxidative fragmentation of the pentose substrate in the photorespiration process. Both reactions occur simultaneously and in competition at the same active site. This is Ribulose bisphosphate carboxylase large chain from Actinidia chinensis (Kiwi).